Consider the following 295-residue polypeptide: Taste receptor type 2 member 120 (295 aa).

The Extracellular segment spans residues 1–5; that stretch reads MNLVE. A helical membrane pass occupies residues 6 to 26; that stretch reads WIVTIIMMTEFLLGNCANVFI. At 27–45 the chain is on the cytoplasmic side; sequence TIVNFIDCVKRRKISSADR. The helical transmembrane segment at 46–66 threads the bilayer; that stretch reads IITAIAIFRIGLLWAMLTNWH. Over 67–80 the chain is Extracellular; the sequence is SHVFTPDTDNLQMR. A helical transmembrane segment spans residues 81-101; it reads VFGGITWAITNHFTTWLGTIL. Residues 102-127 lie on the Cytoplasmic side of the membrane; sequence SMFYLFKIANFSNSLFLHLKRKLDNV. The chain crosses the membrane as a helical span at residues 128 to 148; the sequence is LLVIFLGSSLFLVAYLGMVNI. The Extracellular segment spans residues 149–177; sequence KKIAWMSIHEGNVTTKSKLKHVTSITNML. A glycan (N-linked (GlcNAc...) asparagine) is linked at Asn-160. A helical transmembrane segment spans residues 178–198; that stretch reads LFSLINIVPFGISLNCVLLLI. Residues 199–228 are Cytoplasmic-facing; sequence YSLSKHLKNMKFYGKGCQDQSTMVHIKALQ. The helical transmembrane segment at 229-249 threads the bilayer; sequence TVVSFLLLYATYSSCVIISGW. Residues 250–255 lie on the Extracellular side of the membrane; that stretch reads SLQNAP. A helical membrane pass occupies residues 256–276; it reads VFLFCVTIGSFYPAGHSCILI. Residues 277-295 are Cytoplasmic-facing; the sequence is WGNQKLKQVFLLLLRQMRC.

The protein belongs to the G-protein coupled receptor T2R family.

Its subcellular location is the membrane. In terms of biological role, putative taste receptor which may play a role in the perception of bitterness. The chain is Taste receptor type 2 member 120 from Mus musculus (Mouse).